Here is a 157-residue protein sequence, read N- to C-terminus: Protein Smg homolog (157 aa).

Belongs to the Smg family.

This chain is Protein Smg homolog, found in Photobacterium profundum (strain SS9).